A 523-amino-acid chain; its full sequence is 2-isopropylmalate synthase (523 aa).

The 263-residue stretch at 5-267 (VIIFDTTLRD…HTNINHHEIW (263 aa)) folds into the Pyruvate carboxyltransferase domain. Mn(2+) contacts are provided by Asp-14, His-202, His-204, and Asn-238. Residues 392-523 (RLDYFSVQSG…QNKENNKETV (132 aa)) are regulatory domain.

Belongs to the alpha-IPM synthase/homocitrate synthase family. LeuA type 1 subfamily. As to quaternary structure, homodimer. Requires Mn(2+) as cofactor.

Its subcellular location is the cytoplasm. The catalysed reaction is 3-methyl-2-oxobutanoate + acetyl-CoA + H2O = (2S)-2-isopropylmalate + CoA + H(+). It functions in the pathway amino-acid biosynthesis; L-leucine biosynthesis; L-leucine from 3-methyl-2-oxobutanoate: step 1/4. Catalyzes the condensation of the acetyl group of acetyl-CoA with 3-methyl-2-oxobutanoate (2-ketoisovalerate) to form 3-carboxy-3-hydroxy-4-methylpentanoate (2-isopropylmalate). The protein is 2-isopropylmalate synthase of Salmonella newport (strain SL254).